A 346-amino-acid polypeptide reads, in one-letter code: 3-dehydroquinate synthase (346 aa).

NAD(+) contacts are provided by residues 61–66, 95–99, 119–120, lysine 132, and lysine 141; these read DGEAYK, GVIGD, and TT. 3 residues coordinate Zn(2+): glutamate 174, histidine 233, and histidine 250.

This sequence belongs to the sugar phosphate cyclases superfamily. Dehydroquinate synthase family. It depends on NAD(+) as a cofactor. The cofactor is Co(2+). Zn(2+) serves as cofactor.

It localises to the cytoplasm. It catalyses the reaction 7-phospho-2-dehydro-3-deoxy-D-arabino-heptonate = 3-dehydroquinate + phosphate. It participates in metabolic intermediate biosynthesis; chorismate biosynthesis; chorismate from D-erythrose 4-phosphate and phosphoenolpyruvate: step 2/7. In terms of biological role, catalyzes the conversion of 3-deoxy-D-arabino-heptulosonate 7-phosphate (DAHP) to dehydroquinate (DHQ). In Wolinella succinogenes (strain ATCC 29543 / DSM 1740 / CCUG 13145 / JCM 31913 / LMG 7466 / NCTC 11488 / FDC 602W) (Vibrio succinogenes), this protein is 3-dehydroquinate synthase.